A 291-amino-acid polypeptide reads, in one-letter code: GTPase Era (291 aa).

Residues 2 to 167 (KSGFVSIIGR…LDEIVKYLDK (166 aa)) enclose the Era-type G domain. Positions 10-17 (GRTNAGKS) are G1. 10 to 17 (GRTNAGKS) is a binding site for GTP. Residues 36 to 40 (NATRR) are G2. Residues 57-60 (DTPG) are G3. GTP-binding positions include 57–61 (DTPGL) and 116–119 (NKVD). A G4 region spans residues 116–119 (NKVD). Positions 146–148 (YSS) are G5. In terms of domain architecture, KH type-2 spans 186-274 (YRDFILESIY…LLKLFVTVKK (89 aa)).

This sequence belongs to the TRAFAC class TrmE-Era-EngA-EngB-Septin-like GTPase superfamily. Era GTPase family. In terms of assembly, monomer.

The protein localises to the cytoplasm. It is found in the cell inner membrane. An essential GTPase that binds both GDP and GTP, with rapid nucleotide exchange. Plays a role in 16S rRNA processing and 30S ribosomal subunit biogenesis and possibly also in cell cycle regulation and energy metabolism. This Campylobacter jejuni subsp. jejuni serotype O:6 (strain 81116 / NCTC 11828) protein is GTPase Era.